Here is a 22-residue protein sequence, read N- to C-terminus: Heliocin (22 aa).

Glutamine 1 bears the Pyrrolidone carboxylic acid mark. The tract at residues 1-22 is disordered; that stretch reads QRFIHPTYRPPPQPRRPVIMRA. O-linked (GalNAc...) threonine glycosylation is present at threonine 7.

As to quaternary structure, monomer. As to expression, hemolymph.

The protein resides in the secreted. Its function is as follows. Has antibacterial activity, preferentially against Gram-negative bacteria. The polypeptide is Heliocin (Heliothis virescens (Tobacco budworm moth)).